Here is a 156-residue protein sequence, read N- to C-terminus: Type II secretion system core protein G (156 aa).

Positions 1 to 22 are cleaved as a propeptide — leader sequence; that stretch reads MQQSQRGCGQNSYGQSGYRQRG. At Phe-23 the chain carries N-methylphenylalanine. The helical transmembrane segment at 23 to 43 threads the bilayer; that stretch reads FTLLEIMVVIVILGVLASLVV.

It belongs to the GSP G family. Type II secretion system is composed of four main components: the outer membrane complex, the inner membrane complex, the cytoplasmic secretion ATPase and the periplasm-spanning pseudopilus. Forms homomultimers. Cleaved by the prepilin peptidase. Post-translationally, methylated by prepilin peptidase at the amino group of the N-terminal phenylalanine once the leader sequence is cleaved.

It localises to the cell inner membrane. In terms of biological role, core component of the type II secretion system required for the energy-dependent secretion of extracellular factors such as proteases and toxins from the periplasm. Pseudopilin (pilin-like) protein that polymerizes to form the pseudopilus. Further polymerization triggers pseudopilus growth. The polypeptide is Type II secretion system core protein G (outG) (Pectobacterium carotovorum subsp. carotovorum (Erwinia carotovora subsp. carotovora)).